The chain runs to 488 residues: Probable malate:quinone oxidoreductase (488 aa).

The protein belongs to the MQO family. FAD serves as cofactor.

It carries out the reaction (S)-malate + a quinone = a quinol + oxaloacetate. It participates in carbohydrate metabolism; tricarboxylic acid cycle; oxaloacetate from (S)-malate (quinone route): step 1/1. The sequence is that of Probable malate:quinone oxidoreductase from Neisseria meningitidis serogroup C / serotype 2a (strain ATCC 700532 / DSM 15464 / FAM18).